Reading from the N-terminus, the 264-residue chain is Thymidylate synthase (264 aa).

Residue arginine 21 coordinates dUMP. Histidine 51 is a binding site for (6R)-5,10-methylene-5,6,7,8-tetrahydrofolate. Position 126–127 (126–127 (RR)) interacts with dUMP. The Nucleophile role is filled by cysteine 146. DUMP contacts are provided by residues 166–169 (RSAD), asparagine 177, and 207–209 (HLY). Aspartate 169 is a binding site for (6R)-5,10-methylene-5,6,7,8-tetrahydrofolate. Residue alanine 263 coordinates (6R)-5,10-methylene-5,6,7,8-tetrahydrofolate.

It belongs to the thymidylate synthase family. Bacterial-type ThyA subfamily. In terms of assembly, homodimer.

The protein localises to the cytoplasm. It carries out the reaction dUMP + (6R)-5,10-methylene-5,6,7,8-tetrahydrofolate = 7,8-dihydrofolate + dTMP. It functions in the pathway pyrimidine metabolism; dTTP biosynthesis. In terms of biological role, catalyzes the reductive methylation of 2'-deoxyuridine-5'-monophosphate (dUMP) to 2'-deoxythymidine-5'-monophosphate (dTMP) while utilizing 5,10-methylenetetrahydrofolate (mTHF) as the methyl donor and reductant in the reaction, yielding dihydrofolate (DHF) as a by-product. This enzymatic reaction provides an intracellular de novo source of dTMP, an essential precursor for DNA biosynthesis. This Allorhizobium ampelinum (strain ATCC BAA-846 / DSM 112012 / S4) (Agrobacterium vitis (strain S4)) protein is Thymidylate synthase.